Consider the following 468-residue polypeptide: Glucose transport protein (468 aa).

Residues 1 to 17 (MNPSSSPSQSTANVKFV) lie on the Cytoplasmic side of the membrane. The helical transmembrane segment at 18–38 (LLISGVAALGGFLFGFDTAVI) threads the bilayer. The Extracellular portion of the chain corresponds to 39-58 (NGAVAALQKHFQTDSLLTGL). Residues 59–78 (SVSLALLGSALGAFGAGPIA) form a helical membrane-spanning segment. Over 79–84 (DRHGRI) the chain is Cytoplasmic. Residues 85 to 105 (KTMILAAVLFTLSSIGSGLPF) traverse the membrane as a helical segment. Residues 106–114 (TIWDFIFWR) are Extracellular-facing. The chain crosses the membrane as a helical span at residues 115–135 (VLGGIGVGAASVIAPAYIAEV). At 136–149 (SPAHLRGRLGSLQQ) the chain is on the cytoplasmic side. A helical transmembrane segment spans residues 150 to 170 (LAIVSGIFIALLSNWFIALMA). At 171–186 (GGSAQNPWLFGAAAWR) the chain is on the extracellular side. Residues 187–207 (WMFWTELIPALLYGVCAFLIP) form a helical membrane-spanning segment. The Cytoplasmic portion of the chain corresponds to 208-265 (ESPRYLVAQGQGEKAAAILWKVEGGDVPSRIEEIQATVSLDHKPRFSDLLSRRGGLLP). The chain crosses the membrane as a helical span at residues 266 to 286 (IVWIGMGLSALQQFVGINVIF). The Extracellular portion of the chain corresponds to 287-307 (YYSSVLWRSVGFTEEKSLLIT). Residues 308–328 (VITGFINILTTLVAIAFVDKF) traverse the membrane as a helical segment. Over 329-331 (GRK) the chain is Cytoplasmic. Residues 332–352 (PLLLMGSIGMTITLGILSVVF) form a helical membrane-spanning segment. The Extracellular portion of the chain corresponds to 353-366 (GGATVVNGQPTLTG). Residues 367 to 387 (AAGIIALVTANLYVFSFGFSW) traverse the membrane as a helical segment. Over 388–412 (GPIVWVLLGEMFNNKIRAAALSVAA) the chain is Cytoplasmic. Residues 413–433 (GVQWIANFIISTTFPPLLDTV) form a helical membrane-spanning segment. Over 434–436 (GLG) the chain is Extracellular. The chain crosses the membrane as a helical span at residues 437-457 (PAYGLYATSAAISIFFIWFFV). At 458-468 (KETKGKTLEQM) the chain is on the cytoplasmic side.

Belongs to the major facilitator superfamily. Sugar transporter (TC 2.A.1.1) family.

Its subcellular location is the cell membrane. This Synechocystis sp. (strain ATCC 27184 / PCC 6803 / Kazusa) protein is Glucose transport protein (gtr).